The chain runs to 294 residues: Diphthine synthase (294 aa).

S-adenosyl-L-methionine-binding positions include Asp93, Val96, 121-122 (SG), Leu173, and Ala220.

This sequence belongs to the diphthine synthase family. In terms of assembly, homodimer.

It carries out the reaction 2-[(3S)-amino-3-carboxypropyl]-L-histidyl-[translation elongation factor 2] + 3 S-adenosyl-L-methionine = diphthine-[translation elongation factor 2] + 3 S-adenosyl-L-homocysteine + 3 H(+). The protein operates within protein modification; peptidyl-diphthamide biosynthesis. Functionally, S-adenosyl-L-methionine-dependent methyltransferase that catalyzes the trimethylation of the amino group of the modified target histidine residue in translation elongation factor 2 (EF-2), to form an intermediate called diphthine. The three successive methylation reactions represent the second step of diphthamide biosynthesis. This chain is Diphthine synthase (dphB), found in Aeropyrum pernix (strain ATCC 700893 / DSM 11879 / JCM 9820 / NBRC 100138 / K1).